We begin with the raw amino-acid sequence, 1078 residues long: MPPGTKRLRALGAFSAGLPTRLPEIMLVGSQSFSPGGPNGIIRSQSFAGFSGLQERRSRCNSFIENASALKKPQAKLKKMHNLGHKNNNTPKEPQPKRVEEVYRALKNGLDEYLEFHQTELDKLTAQLKDMKRNSRLGVLYDLDKQIKTIERYMRRLEFHISKVDELYEAYCIQRRLQDGASKMKQAFATSPASKAARESLSEINRSYKEYTENMCAIEAELESLLGEFSIKMKGLAGFARLCPGDQYEIFMKYGRQRWKLKGKIEVNGKQSWDGAETVFLPLIVGFISIKVTELKGLATHILVGSVTCETKELFAARPQVVAVDINDLGTIKLNLEITWYPFDVEDTTPSSGPGNKTAALQRRMSMYSQGTPETPTFKDQSFFRWLRLSVLSALRDTFFATLHHNHSVGDLPSLSLNPKALLEFYSNLPDDIFESGKAAEEKRPLSLSFSDLQDGDCVFTSSSATSPSSSHSAHPEITITPAELTHSSLSSQNEGTEDSSSASSRNSLGEDHEPKSHPKSDTVEPGKPGVATRSGTESLFLESSVAEALLQESDEASELKPVELDTFEGNITKQLVKRLTSAEGPVTTDKLFFEGSVGSESEAGRSFLDGSLEDAFNGLFLALDPHKKQYKEFQDLNQEVTHLDDVLKCKPAGSRSRSSSLSLTVESALESFDFLNTSDFDEEEEDGDDVCHVGGGADSVFSDTETEKSGYRSVHPEARGHLSEALTEDTGVGTSVAGSPLPLTTGNESLDITIVKHLQYCTQLIQQIVFSSKTPFVARSLLEKLSRQVLVMQKLAAVSDENLGNITSVVEAIPEFHKKLSLLAFWTKCCSPSGVYHSSAARLIKQLEASFARSINKDYPGLAEPVFRTLVSQILDRAEPLLSSSLSSEVITVFQYYSFFTSHGVSDLETYLGQLTRQVAMVQTLQSLRDEKLLQTMSDLAPSNLPAQQEVLRTLALLLTRDDNEVSEAVTLYLAAASKNEHFREKALLYYCEALTKANLQLQKAACLALKSLEATESIKMLVTLCQSDTEEIRTVASETLLSLGEDGRLAYEQLDKFPRDCVKVGGRHGTEVATAF.

Ser46 and Ser62 each carry phosphoserine. The segment at 80 to 138 is involved in cell filopodia formation; that stretch reads MHNLGHKNNNTPKEPQPKRVEEVYRALKNGLDEYLEFHQTELDKLTAQLKDMKRNSRLG. Positions 108 to 137 form a coiled coil; that stretch reads NGLDEYLEFHQTELDKLTAQLKDMKRNSRL. Residue Ser366 is modified to Phosphoserine. The span at 488-508 shows a compositional bias: polar residues; sequence SSLSSQNEGTEDSSSASSRNS. The interval 488-534 is disordered; sequence SSLSSQNEGTEDSSSASSRNSLGEDHEPKSHPKSDTVEPGKPGVATR. A compositionally biased stretch (basic and acidic residues) spans 509–525; it reads LGEDHEPKSHPKSDTVE. Phosphoserine is present on Ser582.

Belongs to the RIPOR family. Homooligomer; homooligomerization is regulated by RHOC and leads to the formation of concatemers through the association of N- and C-termini. Interacts (phosphorylated form) with 14-3-3 proteins; these interactions occur during myogenic cell differentiation and also induces T cell proliferation arrest. Interacts (phosphorylated form) with HDAC6; this interaction occurs during early myogenic differentiation, prevents HDAC6 to deacetylate tubulin and also induces T cell proliferation arrest. Interacts with DYSF; this interaction occurs during early myogenic differentiation. Interacts with MYOF. Interacts (via active GTP- or inactive GDP-bound forms) with RHOA; this interaction is direct, blocks the loading of GTP to RHOA and decreases upon chemokine CCL19 stimulation in primary T lymphocytes. Interacts with RHOC. Interacts (via phosphorylated form) with YWHAB; this interaction occurs in a chemokine-dependent manner and does not compete for binding of RIPOR2 with RHOA nor blocks inhibition of RIPOR2-mediated RHOA activity. Interacts with YWHAE. Interacts with YWHAQ. Phosphorylated. Chemokine-induced phosphorylation in neutrophils occurs in a PKC- and AKT-dependent manner, resulting in RIPOR2 interaction with YWHAB and stabilization. Phosphorylated by PKCA, AKT1 and MAPKAPK1A; in vitro. As to expression, expressed in the cochlea. Expressed in inner hair cells and outer hair cells and Hensen's cells (at protein level). Expressed in the brain, cerebellum, spinal cord, retina, heart, spleen liver, kidney, bladder, muscle and lung. Expressed in the cochlea of the inner ear.

It localises to the cytoplasm. Its subcellular location is the cytoskeleton. The protein localises to the cell projection. The protein resides in the filopodium. It is found in the stereocilium. It localises to the stereocilium membrane. Its subcellular location is the apical cell membrane. Acts as an inhibitor of the small GTPase RHOA and plays several roles in the regulation of myoblast and hair cell differentiation, lymphocyte T proliferation and neutrophil polarization. Plays a role in fetal mononuclear myoblast differentiation by promoting filopodia and myotube formation. Maintains naive T lymphocytes in a quiescent state and prevents chemokine-induced T lymphocyte responses, such as cell adhesion, polarization and migration. Involved also in the regulation of neutrophil polarization, chemotaxis and adhesion. Required for normal development of inner and outer hair cell stereocilia within the cochlea of the inner ear. Plays a role for maintaining the structural organization of the basal domain of stereocilia. Involved in mechanosensory hair cell function. Required for normal hearing. The polypeptide is Rho family-interacting cell polarization regulator 2 (Mus musculus (Mouse)).